Reading from the N-terminus, the 310-residue chain is tRNA dimethylallyltransferase (310 aa).

Residue 14 to 21 (GPTASGKT) participates in ATP binding. 16–21 (TASGKT) contacts substrate. The tract at residues 39-42 (DSMQ) is interaction with substrate tRNA.

Belongs to the IPP transferase family. Monomer. Requires Mg(2+) as cofactor.

The enzyme catalyses adenosine(37) in tRNA + dimethylallyl diphosphate = N(6)-dimethylallyladenosine(37) in tRNA + diphosphate. In terms of biological role, catalyzes the transfer of a dimethylallyl group onto the adenine at position 37 in tRNAs that read codons beginning with uridine, leading to the formation of N6-(dimethylallyl)adenosine (i(6)A). The protein is tRNA dimethylallyltransferase of Corynebacterium jeikeium (strain K411).